Consider the following 345-residue polypeptide: Probable deoxyhypusine synthase 2 (345 aa).

Lys-292 (nucleophile) is an active-site residue.

Belongs to the deoxyhypusine synthase family. It depends on NAD(+) as a cofactor.

The catalysed reaction is [eIF5A protein]-L-lysine + spermidine = [eIF5A protein]-deoxyhypusine + propane-1,3-diamine. It participates in protein modification; eIF5A hypusination. Functionally, catalyzes the NAD-dependent oxidative cleavage of spermidine and the subsequent transfer of the butylamine moiety of spermidine to the epsilon-amino group of a specific lysine residue of the eIF-5A precursor protein to form the intermediate deoxyhypusine residue. The protein is Probable deoxyhypusine synthase 2 (dys2) of Methanosarcina mazei (strain ATCC BAA-159 / DSM 3647 / Goe1 / Go1 / JCM 11833 / OCM 88) (Methanosarcina frisia).